The sequence spans 630 residues: 1-deoxy-D-xylulose-5-phosphate synthase (630 aa).

Thiamine diphosphate contacts are provided by residues His-72 and 113 to 115 (GHS). Asp-144 contributes to the Mg(2+) binding site. Thiamine diphosphate contacts are provided by residues 145–146 (GA), Asn-173, Tyr-284, and Glu-367. Residue Asn-173 participates in Mg(2+) binding.

This sequence belongs to the transketolase family. DXPS subfamily. Homodimer. It depends on Mg(2+) as a cofactor. Requires thiamine diphosphate as cofactor.

The catalysed reaction is D-glyceraldehyde 3-phosphate + pyruvate + H(+) = 1-deoxy-D-xylulose 5-phosphate + CO2. Its pathway is metabolic intermediate biosynthesis; 1-deoxy-D-xylulose 5-phosphate biosynthesis; 1-deoxy-D-xylulose 5-phosphate from D-glyceraldehyde 3-phosphate and pyruvate: step 1/1. In terms of biological role, catalyzes the acyloin condensation reaction between C atoms 2 and 3 of pyruvate and glyceraldehyde 3-phosphate to yield 1-deoxy-D-xylulose-5-phosphate (DXP). The sequence is that of 1-deoxy-D-xylulose-5-phosphate synthase from Bacillus mycoides (strain KBAB4) (Bacillus weihenstephanensis).